The primary structure comprises 272 residues: Probable protein VP2 (272 aa).

2 disordered regions span residues 50–116 (GGSR…DFAD) and 195–272 (YSPA…SSSS). The span at 78–90 (APDPPAGNQPPAL) shows a compositional bias: pro residues. Gly residues predominate over residues 94–108 (GDGGNESGAGGGESG). A compositionally biased stretch (basic and acidic residues) spans 218–230 (SKRDNKENRDRGR). The segment covering 231–246 (AKARAKQKPKKRRRRA) has biased composition (basic residues). Residues 249 to 272 (ESSSSSSSKSSFNSEEGSSASSSS) are compositionally biased toward low complexity.

Phosphorylated at C-terminal serines.

The protein is Probable protein VP2 of Homo sapiens (Human).